The sequence spans 400 residues: Renin (400 aa).

Positions 1–23 are cleaved as a signal peptide; the sequence is MDAWRGMPRWGLLLLLWGSCTFG. Residues 24–60 constitute a propeptide, activation peptide; the sequence is LPTETTTFKRISLKRMPSIRESLKERGVDMARLGPER. Residue Asn65 is glycosylated (N-linked (GlcNAc...) asparagine). In terms of domain architecture, Peptidase A1 spans 80-397; that stretch reads YYGEIGIGTP…DRGNNRIGFA (318 aa). The active site involves Asp98. Cys111 and Cys118 are disulfide-bonded. An N-linked (GlcNAc...) asparagine glycan is attached at Asn135. Cys277 and Cys281 are oxidised to a cystine. The active site involves Asp286. Cys319 and Cys356 are oxidised to a cystine.

This sequence belongs to the peptidase A1 family. As to quaternary structure, interacts with ATP6AP2.

It is found in the secreted. The protein resides in the membrane. The enzyme catalyses Cleavage of Leu-|-Xaa bond in angiotensinogen to generate angiotensin I.. With respect to regulation, interaction with ATP6AP2 results in a 5-fold increased efficiency in angiotensinogen processing. Functionally, renin is a highly specific endopeptidase, whose only known function is to generate angiotensin I from angiotensinogen in the plasma, initiating a cascade of reactions that produce an elevation of blood pressure and increased sodium retention by the kidney. The polypeptide is Renin (REN) (Callithrix jacchus (White-tufted-ear marmoset)).